The primary structure comprises 87 residues: Putative sodium channel toxin Ts40 (87 aa).

The N-terminal stretch at 1–19 is a signal peptide; that stretch reads MTALFYLLFLTSVIIETHQ. 3 disulfide bridges follow: Cys41-Cys63, Cys47-Cys68, and Cys51-Cys70.

The protein belongs to the long (4 C-C) scorpion toxin superfamily. Sodium channel inhibitor family. Expressed by the venom gland.

Its subcellular location is the secreted. Putative sodium channel toxin. The protein is Putative sodium channel toxin Ts40 of Tityus serrulatus (Brazilian scorpion).